Reading from the N-terminus, the 446-residue chain is Chromosomal replication initiator protein DnaA (446 aa).

Positions 1–73 (MAAQLNELWQ…INSMKIITTK (73 aa)) are domain I, interacts with DnaA modulators. The segment at 73 to 107 (KKYDIAFLISSEEALETDEDQETDTNNVNTDTSSS) is domain II. The domain III, AAA+ region stretch occupies residues 108 to 324 (MLNPKYKFDS…GALIRIVAFS (217 aa)). ATP-binding residues include Gly152, Gly154, Lys155, and Thr156. The domain IV, binds dsDNA stretch occupies residues 325–446 (SLTNKEISVD…NEITKRFSPK (122 aa)).

Belongs to the DnaA family. In terms of assembly, oligomerizes as a right-handed, spiral filament on DNA at oriC.

It is found in the cytoplasm. Its function is as follows. Plays an essential role in the initiation and regulation of chromosomal replication. ATP-DnaA binds to the origin of replication (oriC) to initiate formation of the DNA replication initiation complex once per cell cycle. Binds the DnaA box (a 9 base pair repeat at the origin) and separates the double-stranded (ds)DNA. Forms a right-handed helical filament on oriC DNA; dsDNA binds to the exterior of the filament while single-stranded (ss)DNA is stabiized in the filament's interior. The ATP-DnaA-oriC complex binds and stabilizes one strand of the AT-rich DNA unwinding element (DUE), permitting loading of DNA polymerase. After initiation quickly degrades to an ADP-DnaA complex that is not apt for DNA replication. Binds acidic phospholipids. This is Chromosomal replication initiator protein DnaA from Clostridium acetobutylicum (strain ATCC 824 / DSM 792 / JCM 1419 / IAM 19013 / LMG 5710 / NBRC 13948 / NRRL B-527 / VKM B-1787 / 2291 / W).